Here is a 507-residue protein sequence, read N- to C-terminus: Xylose import ATP-binding protein XylG (507 aa).

2 consecutive ABC transporter domains span residues 5–242 and 259–504; these read LKMT…VGRE and LEVK…LSEK. 37 to 44 serves as a coordination point for ATP; it reads GENGSGKS.

This sequence belongs to the ABC transporter superfamily. Xylose importer (TC 3.A.1.2.4) family. The complex is composed of two ATP-binding proteins (XylG), two transmembrane proteins (XylH) and a solute-binding protein (XylF).

It localises to the cell inner membrane. It catalyses the reaction D-xylose(out) + ATP + H2O = D-xylose(in) + ADP + phosphate + H(+). Functionally, part of the ABC transporter complex XylFGH involved in xylose import. Responsible for energy coupling to the transport system. This is Xylose import ATP-binding protein XylG from Photobacterium profundum (strain SS9).